A 1006-amino-acid polypeptide reads, in one-letter code: Unconventional myosin-Id (1006 aa).

Alanine 2 bears the N-acetylalanine mark. One can recognise a Myosin motor domain in the interval 9–695; sequence FGKADFVLMD…TLFTLEELRA (687 aa). 102–109 is an ATP binding site; the sequence is GESGAGKT. Serine 200 carries the post-translational modification Phosphoserine. Tyrosine 536 carries the phosphotyrosine modification. An actin-binding region spans residues 572–594; that stretch reads MIALVDNLASKEPYYVRCIKPND. IQ domains are found at residues 699–719 and 721–741; these read IRIV…MRYK and TKAA…SYIH. The TH1 domain maps to 812–1005; it reads GQRADLGLQR…RSGFILSVPG (194 aa).

It belongs to the TRAFAC class myosin-kinesin ATPase superfamily. Myosin family. In terms of assembly, interacts (via the two IQ motifs) with calmodulin. Binds an additional calmodulin chain via a third, C-terminal region. Interacts with F-actin. As to expression, expressed in many tissues. Highest levels in brain, followed by lung and ovary; expression is lowest in spleen.

The protein localises to the cytoplasm. Its subcellular location is the perikaryon. The protein resides in the cell projection. It is found in the dendrite. It localises to the early endosome. The protein localises to the cell cortex. Its function is as follows. Unconventional myosin that functions as actin-based motor protein with ATPase activity. Plays a role in endosomal protein trafficking, and especially in the transfer of cargo proteins from early to recycling endosomes. Required for normal planar cell polarity in ciliated tracheal cells, for normal rotational polarity of cilia, and for coordinated, unidirectional ciliary movement in the trachea. Required for normal, polarized cilia organization in brain ependymal epithelial cells. The protein is Unconventional myosin-Id (MYO1D) of Homo sapiens (Human).